Here is a 390-residue protein sequence, read N- to C-terminus: NADH-dependent butanol dehydrogenase B (390 aa).

Belongs to the iron-containing alcohol dehydrogenase family. As to quaternary structure, homodimer.

It participates in alcohol metabolism; butanol biosynthesis. This chain is NADH-dependent butanol dehydrogenase B (bdhB), found in Clostridium acetobutylicum (strain ATCC 824 / DSM 792 / JCM 1419 / IAM 19013 / LMG 5710 / NBRC 13948 / NRRL B-527 / VKM B-1787 / 2291 / W).